A 122-amino-acid polypeptide reads, in one-letter code: MKQLGKHIILELWGCESQALDDQPGIEKMLVNAVKACGATLICVKTHKFSPQGVTGVAVLSESHISIHTWPELGYAAMDVFTCGEHVKPEDTIPEIEKFLKPEKTEVMDIKRGIIDDGEVKE.

S63 acts as the Schiff-base intermediate with substrate; via pyruvic acid in catalysis. A Pyruvic acid (Ser); by autocatalysis modification is found at S63. The Proton acceptor; for processing activity role is filled by H68. The active-site Proton donor; for catalytic activity is C83.

Belongs to the prokaryotic AdoMetDC family. Type 1 subfamily. In terms of assembly, heterotetramer of two alpha and two beta chains arranged as a dimer of alpha/beta heterodimers. Pyruvate serves as cofactor. Is synthesized initially as an inactive proenzyme. Formation of the active enzyme involves a self-maturation process in which the active site pyruvoyl group is generated from an internal serine residue via an autocatalytic post-translational modification. Two non-identical subunits are generated from the proenzyme in this reaction, and the pyruvate is formed at the N-terminus of the alpha chain, which is derived from the carboxyl end of the proenzyme. The post-translation cleavage follows an unusual pathway, termed non-hydrolytic serinolysis, in which the side chain hydroxyl group of the serine supplies its oxygen atom to form the C-terminus of the beta chain, while the remainder of the serine residue undergoes an oxidative deamination to produce ammonia and the pyruvoyl group blocking the N-terminus of the alpha chain.

It catalyses the reaction S-adenosyl-L-methionine + H(+) = S-adenosyl 3-(methylsulfanyl)propylamine + CO2. It functions in the pathway amine and polyamine biosynthesis; S-adenosylmethioninamine biosynthesis; S-adenosylmethioninamine from S-adenosyl-L-methionine: step 1/1. Catalyzes the decarboxylation of S-adenosylmethionine to S-adenosylmethioninamine (dcAdoMet), the propylamine donor required for the synthesis of the polyamines spermine and spermidine from the diamine putrescine. The polypeptide is S-adenosylmethionine decarboxylase proenzyme (Methanococcus maripaludis (strain DSM 14266 / JCM 13030 / NBRC 101832 / S2 / LL)).